Reading from the N-terminus, the 360-residue chain is Peptide chain release factor 1 (360 aa).

Residue glutamine 235 is modified to N5-methylglutamine.

This sequence belongs to the prokaryotic/mitochondrial release factor family. Methylated by PrmC. Methylation increases the termination efficiency of RF1.

It is found in the cytoplasm. Its function is as follows. Peptide chain release factor 1 directs the termination of translation in response to the peptide chain termination codons UAG and UAA. The protein is Peptide chain release factor 1 of Burkholderia pseudomallei (strain 1106a).